The chain runs to 467 residues: Asparagine--tRNA ligase (467 aa).

This sequence belongs to the class-II aminoacyl-tRNA synthetase family. Homodimer.

It localises to the cytoplasm. It carries out the reaction tRNA(Asn) + L-asparagine + ATP = L-asparaginyl-tRNA(Asn) + AMP + diphosphate + H(+). The polypeptide is Asparagine--tRNA ligase (Histophilus somni (strain 129Pt) (Haemophilus somnus)).